We begin with the raw amino-acid sequence, 319 residues long: ATP-dependent 6-phosphofructokinase (319 aa).

G11 provides a ligand contact to ATP. 21–25 (RAVVR) provides a ligand contact to ADP. Residues 72–73 (RC) and 102–105 (GDGS) contribute to the ATP site. D103 contributes to the Mg(2+) binding site. Residue 125-127 (TID) participates in substrate binding. D127 acts as the Proton acceptor in catalysis. R154 provides a ligand contact to ADP. Residues R162 and 169 to 171 (MGR) each bind substrate. ADP-binding positions include 185–187 (GAE), K211, and 213–215 (KMH). Substrate-binding positions include E222, R243, and 249-252 (HIQR).

The protein belongs to the phosphofructokinase type A (PFKA) family. ATP-dependent PFK group I subfamily. Prokaryotic clade 'B1' sub-subfamily. In terms of assembly, homotetramer. Requires Mg(2+) as cofactor.

It is found in the cytoplasm. The enzyme catalyses beta-D-fructose 6-phosphate + ATP = beta-D-fructose 1,6-bisphosphate + ADP + H(+). It functions in the pathway carbohydrate degradation; glycolysis; D-glyceraldehyde 3-phosphate and glycerone phosphate from D-glucose: step 3/4. Allosterically activated by ADP and other diphosphonucleosides, and allosterically inhibited by phosphoenolpyruvate. In terms of biological role, catalyzes the phosphorylation of D-fructose 6-phosphate to fructose 1,6-bisphosphate by ATP, the first committing step of glycolysis. The sequence is that of ATP-dependent 6-phosphofructokinase from Clostridium botulinum (strain 657 / Type Ba4).